The chain runs to 600 residues: 69 kDa paraflagellar rod protein (600 aa).

The segment at 335–355 is calmodulin-binding; that stretch reads DKQDEAWRRIQELERVLQRLG.

In terms of assembly, heterodimer of a 69 kDa and a 73 kDa protein.

It is found in the cell projection. The protein resides in the cilium. It localises to the flagellum. The protein localises to the cytoplasm. Its subcellular location is the cytoskeleton. Major component of the paraflagellar rod (PFR). The PFR is a highly ordered lattices of fibrous proteins that are located inside the flagellum and assume a fixed orientation with respect to the microtubular axoneme. This chain is 69 kDa paraflagellar rod protein (PFRA), found in Trypanosoma brucei brucei.